The sequence spans 232 residues: Purine nucleoside phosphorylase DeoD-type (232 aa).

H4 contacts a purine D-ribonucleoside. Phosphate is bound by residues G20, R24, R43, and 87–90 (RIGT). Residues 179 to 181 (EME) and 203 to 204 (SD) contribute to the a purine D-ribonucleoside site. Residue D204 is the Proton donor of the active site.

This sequence belongs to the PNP/UDP phosphorylase family. As to quaternary structure, homohexamer; trimer of homodimers.

It catalyses the reaction a purine D-ribonucleoside + phosphate = a purine nucleobase + alpha-D-ribose 1-phosphate. It carries out the reaction a purine 2'-deoxy-D-ribonucleoside + phosphate = a purine nucleobase + 2-deoxy-alpha-D-ribose 1-phosphate. In terms of biological role, catalyzes the reversible phosphorolytic breakdown of the N-glycosidic bond in the beta-(deoxy)ribonucleoside molecules, with the formation of the corresponding free purine bases and pentose-1-phosphate. The sequence is that of Purine nucleoside phosphorylase DeoD-type from Caldanaerobacter subterraneus subsp. tengcongensis (strain DSM 15242 / JCM 11007 / NBRC 100824 / MB4) (Thermoanaerobacter tengcongensis).